The sequence spans 261 residues: Urease accessory protein UreD (261 aa).

The protein belongs to the UreD family. As to quaternary structure, ureD, UreF and UreG form a complex that acts as a GTP-hydrolysis-dependent molecular chaperone, activating the urease apoprotein by helping to assemble the nickel containing metallocenter of UreC. The UreE protein probably delivers the nickel.

The protein localises to the cytoplasm. Its function is as follows. Required for maturation of urease via the functional incorporation of the urease nickel metallocenter. This Haemophilus influenzae (strain ATCC 51907 / DSM 11121 / KW20 / Rd) protein is Urease accessory protein UreD.